We begin with the raw amino-acid sequence, 388 residues long: NADPH-dependent butanol dehydrogenase (388 aa).

This sequence belongs to the iron-containing alcohol dehydrogenase family.

This enzyme has activity using butanol and ethanol as substrates. The protein is NADPH-dependent butanol dehydrogenase (adh1) of Clostridium saccharobutylicum.